The chain runs to 313 residues: Short-chain dehydrogenase/reductase family 9C member 7 (313 aa).

Residue 29 to 53 participates in NADP(+) binding; that stretch reads FITGCDSGFGNLLAKQLVDRGMQVL. A substrate-binding site is contributed by Ser160. Tyr172 functions as the Proton acceptor in the catalytic mechanism. A Phosphoserine modification is found at Ser185.

The protein belongs to the short-chain dehydrogenases/reductases (SDR) family. As to expression, expressed in the skin. Expressed in granular and cornified layers of the epidermis (at protein level). Highly expressed in liver.

Its subcellular location is the cytoplasm. It carries out the reaction a N-[omega-(9R,10R)-epoxy-(13R)-hydroxy-(11E)-octadecenoyloxy]acyl-beta-D-glucosyl-(1&lt;-&gt;1)-sphing-4E-enine + NAD(+) = a N-[omega-(9R,10R)-epoxy-13-oxo-(11E)-octadecenoyloxy]acyl-beta-D-glucosyl-(1&lt;-&gt;1)-sphing-4E-enine + NADH + H(+). The catalysed reaction is a N-[omega-(9R,10R)-epoxy-(13R)-hydroxy-(11E)-octadecenoyloxy]-acylsphing-4E-enine + NAD(+) = a N-[omega-(9R,10R)-epoxy-13-oxo-(11E)-octadecenoyloxy]-acylsphing-4E-enine + NADH + H(+). In terms of biological role, plays a crucial role in the formation of the epidermal permeability barrier. Catalyzes the NAD+-dependent dehydrogenation of the linoleate 9,10-trans-epoxy-11E-13-alcohol esterified in omega-O-acylceramides (such as in N-[omega-(9R,10R)-epoxy-(13R)-hydroxy-(11E)-octadecenoyloxy]-acylsphing-4E-enine) to the corresponding 13-ketone, the reactive moiety required for binding of epidermal ceramides to proteins. Displays weak conversion of all-trans-retinal to all-trans-retinol in the presence of NADH. Has apparently no steroid dehydrogenase activity. The polypeptide is Short-chain dehydrogenase/reductase family 9C member 7 (SDR9C7) (Homo sapiens (Human)).